A 467-amino-acid chain; its full sequence is GTPase Der (467 aa).

2 consecutive EngA-type G domains span residues 25-188 (PVVA…PEAP) and 199-372 (RRVA…ASWE). Residues 31-38 (GRPNVGKS), 78-82 (DTGGW), 140-143 (NKAD), 205-212 (GRPNVGKS), 252-256 (DTAGL), and 317-320 (NKWD) each bind GTP. One can recognise a KH-like domain in the interval 373–455 (TRVPTAQLNA…PIEIAVRPRK (83 aa)).

Belongs to the TRAFAC class TrmE-Era-EngA-EngB-Septin-like GTPase superfamily. EngA (Der) GTPase family. As to quaternary structure, associates with the 50S ribosomal subunit.

In terms of biological role, GTPase that plays an essential role in the late steps of ribosome biogenesis. This chain is GTPase Der, found in Salinispora arenicola (strain CNS-205).